Consider the following 23-residue polypeptide: Apolipophorin-3 (23 aa).

It belongs to the insect apolipophorin-3 family. Equilibrium between a soluble monomer and a bound lipoprotein form. Apolipophorin-3 associates with lipophorin during lipid loading until each particle contains 9 or 14 molecules of apolipophorin-3. In terms of tissue distribution, hemolymph.

It is found in the secreted. In terms of biological role, assists in the loading of diacylglycerol, generated from triacylglycerol stores in the fat body through the action of adipokinetic hormone, into lipophorin, the hemolymph lipoprotein. It increases the lipid carrying capacity of lipophorin by covering the expanding hydrophobic surface resulting from diacylglycerol uptake. It thus plays a critical role in the transport of lipids during flight in several species of insects. This is Apolipophorin-3 from Melanoplus sanguinipes (Migratory grasshopper).